The sequence spans 603 residues: UvrABC system protein C (603 aa).

One can recognise a GIY-YIG domain in the interval 15–92; that stretch reads DQPGCYLMKN…IQKHQPYYNI (78 aa). Residues 197-232 enclose the UVR domain; it reads AQVKKQLTARMERAAGQLEFERAAEIRDQLHYIEVT.

This sequence belongs to the UvrC family. As to quaternary structure, interacts with UvrB in an incision complex.

The protein resides in the cytoplasm. Its function is as follows. The UvrABC repair system catalyzes the recognition and processing of DNA lesions. UvrC both incises the 5' and 3' sides of the lesion. The N-terminal half is responsible for the 3' incision and the C-terminal half is responsible for the 5' incision. The protein is UvrABC system protein C of Limosilactobacillus fermentum (strain NBRC 3956 / LMG 18251) (Lactobacillus fermentum).